The following is a 105-amino-acid chain: MGKLTLLLLVLLGWLQYSLWLGKNGVHDLVRVESDVAAQQSNNAQLKARNDQLFAEIDDLNGGQGAIEERSRNELGMIKPGETFYRLVPEQSKRQPAAPATQDNQ.

Topologically, residues 1–3 are cytoplasmic; that stretch reads MGK. A helical transmembrane segment spans residues 4-21; the sequence is LTLLLLVLLGWLQYSLWL. The Periplasmic segment spans residues 22 to 105; sequence GKNGVHDLVR…PAAPATQDNQ (84 aa). Residues 28 to 62 are a coiled coil; the sequence is DLVRVESDVAAQQSNNAQLKARNDQLFAEIDDLNG.

Belongs to the FtsB family. As to quaternary structure, part of a complex composed of FtsB, FtsL and FtsQ.

Its subcellular location is the cell inner membrane. Its function is as follows. Essential cell division protein. May link together the upstream cell division proteins, which are predominantly cytoplasmic, with the downstream cell division proteins, which are predominantly periplasmic. In Sodalis glossinidius (strain morsitans), this protein is Cell division protein FtsB.